Consider the following 1076-residue polypeptide: MLRNGNEGMSTIPGFSQIQFEGFCRFINQALAEELNKFPAIKDPDHEIAFQLFAKGYQLLEPSIKERDAVYESLTYSSELYVSARLIFGFDVQKQTISIGNIPIMNSLGTFIINGIYRIVINQILLSPGIYYRSELDHKGISIYTGTIISDWGGRSELAIDKKERIWARVSRKQKISILVLSSAMGSNLREILDNVSYPEIFLSFPNAKEKKRIESKEKAILEFYQQFACVGGDLVFSESLCEELQKKFFQQKCELGRIGRRNMNRRLNLDIPQNNTFLLPRDVLAATDHLIGMKFGTGILDDDDMNHLKNKRIRSVADLLQDQFGLALGRLQHAVQKTIRRVFIRQSKPTPQTLVTPTSTSILLITTYETFFGTYPLSQVFDQTNPLTQTVHGRKVSCLGPGGLTGRTSSFRSRDIHPSHYGRICPIDTSEGINVGLTGSLAIHARINHLWGSIESPFYEISAEKAKKKKSRQVVYLSPNRDEYYMIAAGNSLSLNQGIQEEQVVPARYRQEFLTIAWEQIHVRSIFPFQYFSIGGSLIPFIEHNDANRALMSSNMQRQAVPLSRSEKCIVGTGLERQTALDSGVSVIAEREGKILSTDSHKILLSSSGKTLSIPLVNHRRSNKNNCMHQKSRVPRGKSIKKGQILAEGAATVGGELALGKNVLVAYMPWEGYNFEDAVLISERLVYEDIYTSFHIRKYEIQTDTTSQGSAEKITKEIPHLEAHLLRNLDRNGVVRLGSWVETSDILVGKLTPQIASESSYIAEAGLLRAIFGLEVSTSKETSLKLPIGGRGRVIDVKWIQRDPLDIMVRVYILQKREIKVGDKVAGRHGNKGIISKILPRQDMPYLQDGTPVDMVFNPLGVPSRMNVGQIFESSLGLAGDLLKKHYRIAPFDERYEQEASRKLVFSELYEASKETKNPWVFEPEYPGKSRIFDGRTGDPFEQPVLIGKSYILKLIHQVDEKIHGRSTGPYSLVTQQPVRGRAKQGGQRVGEMEVWALEGFGVAHILQEILTYKSDHLIARQEILNATIWGKRIPNHEDPPESFRVLVRELRSLALELNHFLVSEKNFQVTREEV.

The protein belongs to the RNA polymerase beta chain family. In plastids the minimal PEP RNA polymerase catalytic core is composed of four subunits: alpha, beta, beta', and beta''. When a (nuclear-encoded) sigma factor is associated with the core the holoenzyme is formed, which can initiate transcription.

It is found in the plastid. The protein localises to the chloroplast. The enzyme catalyses RNA(n) + a ribonucleoside 5'-triphosphate = RNA(n+1) + diphosphate. Functionally, DNA-dependent RNA polymerase catalyzes the transcription of DNA into RNA using the four ribonucleoside triphosphates as substrates. The polypeptide is DNA-directed RNA polymerase subunit beta (Lolium perenne (Perennial ryegrass)).